Here is a 534-residue protein sequence, read N- to C-terminus: CTP synthase (534 aa).

Positions 1–267 (MTKYIFVTGG…DQIVCDHLKL (267 aa)) are amidoligase domain. Serine 13 is a binding site for CTP. Serine 13 lines the UTP pocket. Position 14–19 (14–19 (SIGKGI)) interacts with ATP. Tyrosine 54 contributes to the L-glutamine binding site. Aspartate 71 contacts ATP. Aspartate 71 and glutamate 141 together coordinate Mg(2+). CTP-binding positions include 148-150 (DIE), 188-193 (KTKPTQ), and lysine 224. UTP-binding positions include 188-193 (KTKPTQ) and lysine 224. A Glutamine amidotransferase type-1 domain is found at 292-534 (KIALVGKYVE…FVTAAVENMK (243 aa)). Glycine 354 contacts L-glutamine. Catalysis depends on cysteine 381, which acts as the Nucleophile; for glutamine hydrolysis. Residues 382 to 385 (LGMQ), glutamate 405, and arginine 463 each bind L-glutamine. Residues histidine 508 and glutamate 510 contribute to the active site.

Belongs to the CTP synthase family. In terms of assembly, homotetramer.

It carries out the reaction UTP + L-glutamine + ATP + H2O = CTP + L-glutamate + ADP + phosphate + 2 H(+). It catalyses the reaction L-glutamine + H2O = L-glutamate + NH4(+). The enzyme catalyses UTP + NH4(+) + ATP = CTP + ADP + phosphate + 2 H(+). It functions in the pathway pyrimidine metabolism; CTP biosynthesis via de novo pathway; CTP from UDP: step 2/2. With respect to regulation, allosterically activated by GTP, when glutamine is the substrate; GTP has no effect on the reaction when ammonia is the substrate. The allosteric effector GTP functions by stabilizing the protein conformation that binds the tetrahedral intermediate(s) formed during glutamine hydrolysis. Inhibited by the product CTP, via allosteric rather than competitive inhibition. Its function is as follows. Catalyzes the ATP-dependent amination of UTP to CTP with either L-glutamine or ammonia as the source of nitrogen. Regulates intracellular CTP levels through interactions with the four ribonucleotide triphosphates. This chain is CTP synthase, found in Streptococcus agalactiae serotype V (strain ATCC BAA-611 / 2603 V/R).